The sequence spans 129 residues: Glycine cleavage system H protein (129 aa).

Positions 22-103 (TGTVGITDYA…AHTAWIMKIE (82 aa)) constitute a Lipoyl-binding domain. K63 carries the post-translational modification N6-lipoyllysine.

The protein belongs to the GcvH family. The glycine cleavage system is composed of four proteins: P, T, L and H. It depends on (R)-lipoate as a cofactor.

In terms of biological role, the glycine cleavage system catalyzes the degradation of glycine. The H protein shuttles the methylamine group of glycine from the P protein to the T protein. The polypeptide is Glycine cleavage system H protein (Acidobacterium capsulatum (strain ATCC 51196 / DSM 11244 / BCRC 80197 / JCM 7670 / NBRC 15755 / NCIMB 13165 / 161)).